We begin with the raw amino-acid sequence, 371 residues long: Cytokine receptor-like factor 2 (371 aa).

An N-terminal signal peptide occupies residues Met1 to Gly22. The Extracellular portion of the chain corresponds to Gln23 to Lys231. N-linked (GlcNAc...) asparagine glycans are attached at residues Asn47 and Asn55. Cys71 and Cys84 are joined by a disulfide. Residues Asn101 and Asn169 are each glycosylated (N-linked (GlcNAc...) asparagine). Residues Lys118 to Arg211 form the Fibronectin type-III domain. An intrachain disulfide couples Cys180 to Cys218. Positions Pro200 to Ser204 match the WSXWS motif motif. The chain crosses the membrane as a helical span at residues Phe232 to Trp252. At Lys253–Leu371 the chain is on the cytoplasmic side. The short motif at Leu261–Lys269 is the Box 1 motif element. Basic and acidic residues predominate over residues Glu322 to Ala336. The disordered stretch occupies residues Glu322 to Pro347.

The protein belongs to the type I cytokine receptor family. Type 5 subfamily. As to quaternary structure, heterodimer of CRLF2 and IL7R. In terms of tissue distribution, expressed in heart, skeletal muscle, kidney and adult and fetal liver. Primarily expressed in dendrites and monocytes. Weakly expressed in T-cells.

It localises to the cell membrane. Its subcellular location is the secreted. In terms of biological role, receptor for thymic stromal lymphopoietin (TSLP). Forms a functional complex with TSLP and IL7R which is capable of stimulating cell proliferation through activation of STAT3 and STAT5. Also activates JAK2. Implicated in the development of the hematopoietic system. This Homo sapiens (Human) protein is Cytokine receptor-like factor 2 (CRLF2).